Here is a 379-residue protein sequence, read N- to C-terminus: Beta sliding clamp (379 aa).

Belongs to the beta sliding clamp family. As to quaternary structure, forms a ring-shaped head-to-tail homodimer around DNA which binds and tethers DNA polymerases and other proteins to the DNA. The DNA replisome complex has a single clamp-loading complex (3 tau and 1 each of delta, delta', psi and chi subunits) which binds 3 Pol III cores (1 core on the leading strand and 2 on the lagging strand) each with a beta sliding clamp dimer. Additional proteins in the replisome are other copies of gamma, psi and chi, Ssb, DNA helicase and RNA primase.

It is found in the cytoplasm. In terms of biological role, confers DNA tethering and processivity to DNA polymerases and other proteins. Acts as a clamp, forming a ring around DNA (a reaction catalyzed by the clamp-loading complex) which diffuses in an ATP-independent manner freely and bidirectionally along dsDNA. Initially characterized for its ability to contact the catalytic subunit of DNA polymerase III (Pol III), a complex, multichain enzyme responsible for most of the replicative synthesis in bacteria; Pol III exhibits 3'-5' exonuclease proofreading activity. The beta chain is required for initiation of replication as well as for processivity of DNA replication. The chain is Beta sliding clamp (dnaN) from Rickettsia bellii (strain RML369-C).